The following is a 261-amino-acid chain: Thioesterase AMT4 (261 aa).

Belongs to the AMT4 thioesterase family.

It functions in the pathway mycotoxin biosynthesis. Its function is as follows. Thioesterase; part of the gene clusters that mediate the biosynthesis of AM-toxins, host-selective toxins (HSTs) causing Alternaria blotch on apple, a worldwide distributed disease. AM-toxins are cyclic depsipeptides containing the 3 residues 2-hydroxy-isovaleric acid (2-HIV), dehydroalanine, L-alanine which are common for all 3 AM-toxins I to III. The fourth precursor is L-alpha-amino-methoxyphenyl-valeric acid (L-Amv) for AM-toxin I, L-alpha-amino-phenyl-valeric acid (L-Apv) for AM-toxin II, and L-alpha-amino-hydroxyphenyl-valeric acid (L-Ahv) for AM-toxin III. AM-toxins have two target sites for affecting susceptible apple cells; they cause invagination of the plasma membrane and electrolyte loss and chloroplast disorganization. The non-ribosomal peptide synthetase AMT1 contains 4 catalytic modules and is responsible for activation of each residue in AM-toxin. The aldo-keto reductase AMT2 catalyzes the conversion of 2-keto-isovaleric acid (2-KIV) to 2-hydroxy-isovaleric acid (2-HIV), one of the precursor residues incorporated by AMT1 during AM-toxin biosynthesis, by reduction of its ketone to an alcohol. The cytochrome P450 monooxygenase AMT3 and the thioesterase AMT4 are also important for AM-toxin production, but their exact function within the AM-toxin biosynthesis are not known yet. Up to 21 proteins (including AMT1 to AMT4) are predicted to be involved in AM-toxin biosynthesis since their expression ishighly up-regulated in AM-toxin-producing cultures. In Alternaria alternata (Alternaria rot fungus), this protein is Thioesterase AMT4.